The sequence spans 699 residues: tRNA wybutosine-synthesizing protein 4 (699 aa).

S-adenosyl-L-methionine-binding positions include Arg-94, Gly-120, Asp-151, 197 to 198 (DL), and Glu-224.

The protein belongs to the methyltransferase superfamily. LCMT family.

The catalysed reaction is 7-[(3S)-3-amino-3-carboxypropyl]wyosine(37) in tRNA(Phe) + S-adenosyl-L-methionine = 7-[(3S)-(3-amino-3-methoxycarbonyl)propyl]wyosine(37) in tRNA(Phe) + S-adenosyl-L-homocysteine. The enzyme catalyses 7-[(3S)-(3-amino-3-methoxycarbonyl)propyl]wyosine(37) in tRNA(Phe) + S-adenosyl-L-methionine + CO2 = wybutosine(37) in tRNA(Phe) + S-adenosyl-L-homocysteine + 2 H(+). The protein operates within tRNA modification; wybutosine-tRNA(Phe) biosynthesis. Functionally, probable S-adenosyl-L-methionine-dependent methyltransferase that acts as a component of the wybutosine biosynthesis pathway. Wybutosine is a hyper modified guanosine with a tricyclic base found at the 3'-position adjacent to the anticodon of eukaryotic phenylalanine tRNA. May methylate the carboxyl group of leucine residues to form alpha-leucine ester residues. The protein is tRNA wybutosine-synthesizing protein 4 (PPM2) of Eremothecium gossypii (strain ATCC 10895 / CBS 109.51 / FGSC 9923 / NRRL Y-1056) (Yeast).